The chain runs to 109 residues: Large ribosomal subunit protein uL22 (109 aa).

It belongs to the universal ribosomal protein uL22 family. As to quaternary structure, part of the 50S ribosomal subunit.

This protein binds specifically to 23S rRNA; its binding is stimulated by other ribosomal proteins, e.g. L4, L17, and L20. It is important during the early stages of 50S assembly. It makes multiple contacts with different domains of the 23S rRNA in the assembled 50S subunit and ribosome. Its function is as follows. The globular domain of the protein is located near the polypeptide exit tunnel on the outside of the subunit, while an extended beta-hairpin is found that lines the wall of the exit tunnel in the center of the 70S ribosome. The sequence is that of Large ribosomal subunit protein uL22 from Psychrobacter cryohalolentis (strain ATCC BAA-1226 / DSM 17306 / VKM B-2378 / K5).